An 806-amino-acid chain; its full sequence is Dimethyl sulfoxide reductase DmsA (806 aa).

Positions 1 to 35 (MSNFNQISRRDFVKASSAGAALAVSNLTLPFNVMA) form a signal peptide, tat-type signal. Residues 47-109 (ERIVWSACTV…SMRRRVYNPD (63 aa)) enclose the 4Fe-4S Mo/W bis-MGD-type domain. Residues Cys-54, Cys-58, Cys-62, and Cys-95 each coordinate [4Fe-4S] cluster. Mo-bis(molybdopterin guanine dinucleotide) is bound by residues 163-167 (LGGTM), Ser-196, 236-237 (ET), 262-263 (ID), 283-285 (GTD), 378-379 (WG), Arg-382, Asn-480, 504-505 (ID), His-693, 699-701 (HST), Asn-780, and 796-797 (QH). Positions 786-806 (RPSPLAKGNPQHSNLVQVERL) are disordered. A compositionally biased stretch (polar residues) spans 795-806 (PQHSNLVQVERL).

The protein belongs to the prokaryotic molybdopterin-containing oxidoreductase family. Heterotrimeric enzyme composed of a catalytic heterodimer (DmsAB) and a membrane anchor protein (DmsC). It depends on [4Fe-4S] cluster as a cofactor. Requires Mo-bis(molybdopterin guanine dinucleotide) as cofactor. Predicted to be exported by the Tat system. The position of the signal peptide cleavage has not been experimentally proven.

The protein localises to the cell membrane. It catalyses the reaction dimethyl sulfide + a menaquinone + H2O = dimethyl sulfoxide + a menaquinol. Functionally, catalyzes the reduction of dimethyl sulfoxide (DMSO) to dimethyl sulfide (DMS). The terminal DMSO reductase can also use various sulfoxides and N-oxide compounds as terminal electron acceptor in addition to DMSO. The chain is Dimethyl sulfoxide reductase DmsA (dmsA) from Haemophilus influenzae (strain ATCC 51907 / DSM 11121 / KW20 / Rd).